The sequence spans 237 residues: Orotidine 5'-phosphate decarboxylase (237 aa).

Substrate contacts are provided by residues D11, K34, 61-70 (DLKLHDIPNT), T124, R186, Q195, G215, and R216. K63 serves as the catalytic Proton donor.

Belongs to the OMP decarboxylase family. Type 1 subfamily. Homodimer.

The enzyme catalyses orotidine 5'-phosphate + H(+) = UMP + CO2. It functions in the pathway pyrimidine metabolism; UMP biosynthesis via de novo pathway; UMP from orotate: step 2/2. Catalyzes the decarboxylation of orotidine 5'-monophosphate (OMP) to uridine 5'-monophosphate (UMP). The polypeptide is Orotidine 5'-phosphate decarboxylase (Lactococcus lactis subsp. lactis (strain IL1403) (Streptococcus lactis)).